The sequence spans 414 residues: Dual-specificity RNA methyltransferase RlmN (414 aa).

Glu127 acts as the Proton acceptor in catalysis. One can recognise a Radical SAM core domain in the interval 133–380 (GEGRGTLCVS…SPIRMPRGRD (248 aa)). A disulfide bond links Cys140 and Cys385. Residues Cys147, Cys151, and Cys154 each coordinate [4Fe-4S] cluster. Residues 211–212 (GE), Ser243, 265–267 (SLH), and Asn342 each bind S-adenosyl-L-methionine. Cys385 functions as the S-methylcysteine intermediate in the catalytic mechanism.

This sequence belongs to the radical SAM superfamily. RlmN family. [4Fe-4S] cluster serves as cofactor.

It is found in the cytoplasm. It catalyses the reaction adenosine(2503) in 23S rRNA + 2 reduced [2Fe-2S]-[ferredoxin] + 2 S-adenosyl-L-methionine = 2-methyladenosine(2503) in 23S rRNA + 5'-deoxyadenosine + L-methionine + 2 oxidized [2Fe-2S]-[ferredoxin] + S-adenosyl-L-homocysteine. The catalysed reaction is adenosine(37) in tRNA + 2 reduced [2Fe-2S]-[ferredoxin] + 2 S-adenosyl-L-methionine = 2-methyladenosine(37) in tRNA + 5'-deoxyadenosine + L-methionine + 2 oxidized [2Fe-2S]-[ferredoxin] + S-adenosyl-L-homocysteine. Functionally, specifically methylates position 2 of adenine 2503 in 23S rRNA and position 2 of adenine 37 in tRNAs. m2A2503 modification seems to play a crucial role in the proofreading step occurring at the peptidyl transferase center and thus would serve to optimize ribosomal fidelity. The protein is Dual-specificity RNA methyltransferase RlmN of Bartonella bacilliformis (strain ATCC 35685 / KC583 / Herrer 020/F12,63).